Here is a 409-residue protein sequence, read N- to C-terminus: Bone morphogenetic protein 4 (409 aa).

The signal sequence occupies residues 1 to 19 (MIPGNRMLMVVLLCQVLLG). Residues 20–293 (GASHASLIPE…ALTRRRRAKR (274 aa)) constitute a propeptide that is removed on maturation. Phosphoserine is present on S91. The disordered stretch occupies residues 91–110 (SGEEEEEEQMPSGGLEYPER). N144, N209, N351, and N366 each carry an N-linked (GlcNAc...) asparagine glycan. 3 cysteine pairs are disulfide-bonded: C309/C374, C338/C406, and C342/C408.

The protein belongs to the TGF-beta family. Homodimer; disulfide-linked. Interacts with GREM2. Part of a complex consisting of TWSG1 and CHRD. Interacts with the serine proteases, HTRA1 and HTRA3; the interaction with either inhibits BMP4-mediated signaling. The HTRA protease activity is required for this inhibition. Interacts with SOSTDC1. Interacts with FBN1 (via N-terminal domain) and FBN2. Interacts with type I receptor BMPR1A. Interacts with type II receptor BMPR2. Interacts with FSTL1; this interaction inhibits the activation of the BMP4/Smad1/5/8 signaling pathway. Interacts with SCUBE3. Interacts with TGFBR3.

The protein localises to the secreted. The protein resides in the extracellular space. It is found in the extracellular matrix. Its function is as follows. Growth factor of the TGF-beta superfamily that plays essential roles in many developmental processes, including neurogenesis, vascular development, angiogenesis and osteogenesis. Acts in concert with PTHLH/PTHRP to stimulate ductal outgrowth during embryonic mammary development and to inhibit hair follicle induction. Initiates the canonical BMP signaling cascade by associating with type I receptor BMPR1A and type II receptor BMPR2. Once all three components are bound together in a complex at the cell surface, BMPR2 phosphorylates and activates BMPR1A. In turn, BMPR1A propagates signal by phosphorylating SMAD1/5/8 that travel to the nucleus and act as activators and repressors of transcription of target genes. Positively regulates the expression of odontogenic development regulator MSX1 via inducing the IPO7-mediated import of SMAD1 to the nucleus. Required for MSX1-mediated mesenchymal molar tooth bud development beyond the bud stage, via promoting Wnt signaling. Acts as a positive regulator of odontoblast differentiation during mesenchymal tooth germ formation, expression is repressed during the bell stage by MSX1-mediated inhibition of CTNNB1 signaling. Able to induce its own expression in dental mesenchymal cells and also in the neighboring dental epithelial cells via an MSX1-mediated pathway. Can also signal through non-canonical BMP pathways such as ERK/MAP kinase, PI3K/Akt, or SRC cascades. For example, induces SRC phosphorylation which, in turn, activates VEGFR2, leading to an angiogenic response. The chain is Bone morphogenetic protein 4 (BMP4) from Oryctolagus cuniculus (Rabbit).